Reading from the N-terminus, the 151-residue chain is Ribosome maturation factor RimP (151 aa).

The protein belongs to the RimP family.

Its subcellular location is the cytoplasm. Required for maturation of 30S ribosomal subunits. This is Ribosome maturation factor RimP from Haemophilus influenzae (strain 86-028NP).